Consider the following 691-residue polypeptide: DNA ligase (691 aa).

Residues 41-45 (DAEYD), 90-91 (SL), and Glu130 contribute to the NAD(+) site. Lys132 (N6-AMP-lysine intermediate) is an active-site residue. Residues Arg153, Glu190, Lys307, and Lys331 each contribute to the NAD(+) site. Zn(2+) is bound by residues Cys425, Cys428, Cys443, and Cys449. The BRCT domain occupies 610-691 (APQGVLAGKT…LHQLLEGNTP (82 aa)).

Belongs to the NAD-dependent DNA ligase family. LigA subfamily. Mg(2+) is required as a cofactor. Requires Mn(2+) as cofactor.

The enzyme catalyses NAD(+) + (deoxyribonucleotide)n-3'-hydroxyl + 5'-phospho-(deoxyribonucleotide)m = (deoxyribonucleotide)n+m + AMP + beta-nicotinamide D-nucleotide.. DNA ligase that catalyzes the formation of phosphodiester linkages between 5'-phosphoryl and 3'-hydroxyl groups in double-stranded DNA using NAD as a coenzyme and as the energy source for the reaction. It is essential for DNA replication and repair of damaged DNA. The protein is DNA ligase of Burkholderia ambifaria (strain MC40-6).